The primary structure comprises 198 residues: Recombination protein RecR (198 aa).

The C4-type zinc-finger motif lies at 56 to 71 (CHVCGNVDTGDPCGIC). The Toprim domain occupies 79 to 174 (RMLCVVEEVA…RLTQLAHGLP (96 aa)).

This sequence belongs to the RecR family.

In terms of biological role, may play a role in DNA repair. It seems to be involved in an RecBC-independent recombinational process of DNA repair. It may act with RecF and RecO. This Rhizorhabdus wittichii (strain DSM 6014 / CCUG 31198 / JCM 15750 / NBRC 105917 / EY 4224 / RW1) (Sphingomonas wittichii) protein is Recombination protein RecR.